Consider the following 29-residue polypeptide: Orphan peptide CllNtx (29 aa).

Contains 3 disulfide bonds. Expressed by the venom gland.

Its subcellular location is the secreted. Its function is as follows. May act as a toxin. This is Orphan peptide CllNtx from Centruroides limpidus (Mexican scorpion).